Reading from the N-terminus, the 430-residue chain is tRNA(Ile)-lysidine synthase (430 aa).

Residue 21 to 26 (SGGLDS) participates in ATP binding.

The protein belongs to the tRNA(Ile)-lysidine synthase family.

The protein localises to the cytoplasm. It catalyses the reaction cytidine(34) in tRNA(Ile2) + L-lysine + ATP = lysidine(34) in tRNA(Ile2) + AMP + diphosphate + H(+). Its function is as follows. Ligates lysine onto the cytidine present at position 34 of the AUA codon-specific tRNA(Ile) that contains the anticodon CAU, in an ATP-dependent manner. Cytidine is converted to lysidine, thus changing the amino acid specificity of the tRNA from methionine to isoleucine. The sequence is that of tRNA(Ile)-lysidine synthase from Salmonella paratyphi B (strain ATCC BAA-1250 / SPB7).